Here is a 217-residue protein sequence, read N- to C-terminus: 7-cyano-7-deazaguanine synthase (217 aa).

ATP is bound at residue 7–17 (LSGGMDSTTLL). Residues cysteine 183, cysteine 191, cysteine 194, and cysteine 197 each contribute to the Zn(2+) site.

It belongs to the QueC family. Requires Zn(2+) as cofactor.

It catalyses the reaction 7-carboxy-7-deazaguanine + NH4(+) + ATP = 7-cyano-7-deazaguanine + ADP + phosphate + H2O + H(+). It functions in the pathway purine metabolism; 7-cyano-7-deazaguanine biosynthesis. Its function is as follows. Catalyzes the ATP-dependent conversion of 7-carboxy-7-deazaguanine (CDG) to 7-cyano-7-deazaguanine (preQ(0)). This chain is 7-cyano-7-deazaguanine synthase, found in Methanoregula boonei (strain DSM 21154 / JCM 14090 / 6A8).